The sequence spans 46 residues: Iota-conotoxin-like M11.1 (46 aa).

4 disulfide bridges follow: Cys5–Cys19, Cys12–Cys22, Cys18–Cys27, and Cys21–Cys38. Met44 carries the D-methionine modification. Position 46 (Arg46) is a propeptide, removed by a carboxypeptidase.

The protein belongs to the conotoxin I1 superfamily. Expressed by the venom duct.

Its subcellular location is the secreted. Iota-conotoxins bind to voltage-gated sodium channels (Nav) and act as agonists by shifting the voltage-dependence of activation to more hyperpolarized levels. Produces general excitatory symptoms. This chain is Iota-conotoxin-like M11.1, found in Conus magus (Magical cone).